The primary structure comprises 503 residues: MSEARGEPGSGPEAGARFFCTAGRGLEPFVMREVRARLAATQVEYISGKVFFTTCSDLNMLKKLKSAERLFLLIKKQFPLIISSVSKGKIFNEMQRLINEDPGSWLNAISIWKNLLELDAKKEKLSQRDDNQLKRKVGENEIIAKKLKIEQMQKIEENRDCQLEKQIKEETLEQRDFTTKSEKFQEEEFQNDIEKAIDTHNQNDLTFRVSCRCSGTIGKAFTAQEVGKVIGIAIMKHFGWKADLRNPQLEIFIHLNDIYSVVGIPVFRVSLASRAYIKTAGLRSTIAWAMASLADIKAGAFVLDPMCGLGTILLEAAKEWPDVYYVGADVSDSQLLGTWDNLKAAGLEDKIELLKISVIELPLPSESVDIIISDIPFGKKFKLGKDIKSILQEMERVLHVGGTIVLLLSEDHHRRLTDCKESNIPFNSKDSHTDEPGIKKCLNPEEKTGAFKTASTSFEASNHKFLDRMSPFGSLVPVECYKVSLGKTDAFICKYKKSHSSGL.

Positions 161–266 constitute a THUMP domain; that stretch reads CQLEKQIKEE…DIYSVVGIPV (106 aa).

It belongs to the methyltransferase superfamily. Part of the heterodimeric THUMPD2-TRM112 methyltransferase complex; this complex forms an active tRNA methyltransferase, where TRMT112 acts as an activator of the catalytic subunit THUMPD2. Expressed in a variety of tissues including brain, colon, gingiva, heart, kidney, liver, lung, placenta, small intestine, spleen and thymus.

The protein resides in the nucleus. It catalyses the reaction guanosine in U6 snRNA + S-adenosyl-L-methionine = N(2)-methylguanosine in U6 snRNA + S-adenosyl-L-homocysteine + H(+). Functionally, catalytic subunit of the THUMPD2-TRM112 methyltransferase complex, that specifically mediates the S-adenosyl-L-methionine-dependent N(2)-methylation of guanosine nucleotides, most probably at position 72 (m2G72), in the U6snRNA of the major spliceosome. This modification in the U6 snRNA affects the constitutive splicing efficiency of introns that have suboptimal splice sites and can impact final mRNA levels. In Homo sapiens (Human), this protein is U6 snRNA (guanine-N(2))-methyltransferase THUMPD2.